Reading from the N-terminus, the 274-residue chain is Penicillin-insensitive murein endopeptidase (274 aa).

The N-terminal stretch at 1–19 (MKKTAIALLAWFVSSASLA) is a signal peptide. 3 disulfide bridges follow: cysteine 44–cysteine 265, cysteine 187–cysteine 235, and cysteine 216–cysteine 223. The Zn(2+) site is built by histidine 110, histidine 113, aspartate 120, aspartate 147, histidine 150, and histidine 211. The tract at residues 225–274 (DQPLPPPGDGCGAELQSWFEPPKPGTTKPEKKTPPPLPPSCQALLDEHVL) is disordered.

Belongs to the peptidase M74 family. Dimer. Zn(2+) serves as cofactor.

It localises to the periplasm. Murein endopeptidase that cleaves the D-alanyl-meso-2,6-diamino-pimelyl amide bond that connects peptidoglycan strands. Likely plays a role in the removal of murein from the sacculus. This chain is Penicillin-insensitive murein endopeptidase, found in Salmonella heidelberg (strain SL476).